The chain runs to 339 residues: Hairy/enhancer-of-split related with YRPW motif protein 2 (339 aa).

The segment at 1 to 52 (MKRPCEETTSESDLDETIDVGSENNYPGHATSSVMRSNSPTTTSQIMARKKR) is disordered. Positions 8-18 (TTSESDLDETI) are enriched in acidic residues. A compositionally biased stretch (polar residues) spans 22-46 (SENNYPGHATSSVMRSNSPTTTSQI). The interval 47-116 (MARKKRRGII…GGKGYFDAHA (70 aa)) is transcriptional repression and interaction with NCOR1 and SIN3A. The bHLH domain occupies 48–103 (ARKKRRGIIEKRRRDRINNSLSELRRLVPTAFEKQGSAKLEKAEILQMTVDHLKML). The Orange domain occupies 122–157 (MSIGFRECLTEVARYLSSVEGLDPSDPLRVRLVSHL). Residues 310 to 339 (SVSAASSPQQTSTGTNNKPYQPWGTEVGAF) are disordered. Residues 318–328 (QQTSTGTNNKP) show a composition bias toward polar residues. A YQPW motif motif is present at residues 329 to 332 (YQPW).

Belongs to the HEY family. May self-associate. Interacts with ARNT. Interacts with GATA4, GATA6, HES1 and HEYL. Interacts with HDAC1, NCOR1 and SIN3A. In terms of tissue distribution, highly expressed in the aorta, lower expression detected in the heart, brain, kidney, lung, muscle, ovary and testis.

It is found in the nucleus. Functionally, transcriptional repressor which functions as a downstream effector of Notch signaling in cardiovascular development. Specifically required for the Notch-induced endocardial epithelial to mesenchymal transition, which is itself criticial for cardiac valve and septum development. May be required in conjunction with HEY1 to specify arterial cell fate or identity. Promotes maintenance of neuronal precursor cells and glial versus neuronal fate specification. Binds preferentially to the canonical E box sequence 5'-CACGTG-3'. Represses transcription by the cardiac transcriptional activators GATA4 and GATA6 and by the neuronal bHLH factors ASCL1/MASH1 and NEUROD4/MATH3. The polypeptide is Hairy/enhancer-of-split related with YRPW motif protein 2 (Hey2) (Mus musculus (Mouse)).